A 436-amino-acid chain; its full sequence is Phosphomethylpyrimidine synthase (436 aa).

Substrate-binding positions include asparagine 69, methionine 98, tyrosine 127, histidine 163, 185 to 187 (SRG), 226 to 229 (DACR), and glutamate 265. Histidine 269 serves as a coordination point for Zn(2+). Tyrosine 292 is a substrate binding site. Residue histidine 333 coordinates Zn(2+). [4Fe-4S] cluster is bound by residues cysteine 409, cysteine 412, and cysteine 416.

The protein belongs to the ThiC family. Requires [4Fe-4S] cluster as cofactor.

It carries out the reaction 5-amino-1-(5-phospho-beta-D-ribosyl)imidazole + S-adenosyl-L-methionine = 4-amino-2-methyl-5-(phosphooxymethyl)pyrimidine + CO + 5'-deoxyadenosine + formate + L-methionine + 3 H(+). It functions in the pathway cofactor biosynthesis; thiamine diphosphate biosynthesis. Functionally, catalyzes the synthesis of the hydroxymethylpyrimidine phosphate (HMP-P) moiety of thiamine from aminoimidazole ribotide (AIR) in a radical S-adenosyl-L-methionine (SAM)-dependent reaction. The polypeptide is Phosphomethylpyrimidine synthase (Clostridium perfringens (strain ATCC 13124 / DSM 756 / JCM 1290 / NCIMB 6125 / NCTC 8237 / Type A)).